Reading from the N-terminus, the 155-residue chain is Small ribosomal subunit protein uS7cz/uS7cy (155 aa).

This sequence belongs to the universal ribosomal protein uS7 family. As to quaternary structure, part of the 30S ribosomal subunit.

It localises to the plastid. The protein resides in the chloroplast. One of the primary rRNA binding proteins, it binds directly to 16S rRNA where it nucleates assembly of the head domain of the 30S subunit. This chain is Small ribosomal subunit protein uS7cz/uS7cy (rps7-A), found in Nymphaea alba (White water-lily).